The sequence spans 293 residues: Indole-3-glycerol phosphate synthase (293 aa).

It belongs to the TrpC family.

It carries out the reaction 1-(2-carboxyphenylamino)-1-deoxy-D-ribulose 5-phosphate + H(+) = (1S,2R)-1-C-(indol-3-yl)glycerol 3-phosphate + CO2 + H2O. It functions in the pathway amino-acid biosynthesis; L-tryptophan biosynthesis; L-tryptophan from chorismate: step 4/5. This is Indole-3-glycerol phosphate synthase from Rippkaea orientalis (strain PCC 8801 / RF-1) (Cyanothece sp. (strain PCC 8801)).